We begin with the raw amino-acid sequence, 786 residues long: Pheromone-regulated membrane protein 10 (786 aa).

A compositionally biased stretch (basic and acidic residues) spans 1–28; that stretch reads MADSGDKDVSKSVRFDKESIESKKRSSV. 2 disordered regions span residues 1–65 and 77–103; these read MADS…EDGN and NGGA…DNDN. The segment covering 29–42 has biased composition (low complexity); it reads DDSASSYSSSSSGQ. 10 helical membrane-spanning segments follow: residues 469–489, 491–511, 521–541, 545–565, 584–604, 620–640, 645–665, 675–695, 697–717, and 751–771; these read WVCV…AFGG, WINL…QFIL, VFEI…GSIP, ICFG…YIIL, FYAI…AALF, PISP…ISLI, WTQL…TYWS, FTAA…SRIW, GLAV…GIAS, and FGIT…ASTL.

The protein belongs to the ThrE exporter (TC 2.A.79) family.

Its subcellular location is the membrane. This chain is Pheromone-regulated membrane protein 10, found in Candida glabrata (strain ATCC 2001 / BCRC 20586 / JCM 3761 / NBRC 0622 / NRRL Y-65 / CBS 138) (Yeast).